We begin with the raw amino-acid sequence, 445 residues long: Phosphoglucosamine mutase (445 aa).

Ser101 serves as the catalytic Phosphoserine intermediate. Ser101, Asp240, Asp242, and Asp244 together coordinate Mg(2+). Residue Ser101 is modified to Phosphoserine.

It belongs to the phosphohexose mutase family. Requires Mg(2+) as cofactor. Activated by phosphorylation.

The catalysed reaction is alpha-D-glucosamine 1-phosphate = D-glucosamine 6-phosphate. Catalyzes the conversion of glucosamine-6-phosphate to glucosamine-1-phosphate. The sequence is that of Phosphoglucosamine mutase from Pseudomonas fluorescens (strain ATCC BAA-477 / NRRL B-23932 / Pf-5).